Reading from the N-terminus, the 373-residue chain is Secondary metabolism regulator laeA (373 aa).

Disordered regions lie at residues 1–21 (MFLNGQGGQRPPTVASPPLNV) and 53–81 (AAERDPAAGRWHANGSPSINSTSSKNPDR). Over residues 67 to 77 (GSPSINSTSSK) the composition is skewed to polar residues.

This sequence belongs to the methyltransferase superfamily. LaeA methyltransferase family. Component of the heterotrimeric velvet complex composed of laeA, veA and velB; VeA acting as a bridging protein between laeA and velB.

The protein localises to the nucleus. It catalyses the reaction L-methionyl-[protein] + S-adenosyl-L-methionine = S-methyl-L-methionyl-[protein] + S-adenosyl-L-homocysteine. Its function is as follows. Methyltransferase that performs automethylation. No other methyl-accepting substrate has been identified yet. Component of the velvet transcription factor complex that acts as a global regulator for secondary metabolite gene expression. Controls the expression of the cyclopiazonic acid (CPA) gene clusters. Regulates also pigmentation and conidial head morphology. The protein is Secondary metabolism regulator laeA of Aspergillus fumisynnematus.